Consider the following 264-residue polypeptide: MQKASRKNKKERGVSIKVKTSVHNLSKTQQTKLTVGRLGLGLIIIQHGPYLQITHLIRKGAAANDGKLQPGDVLISVGYANVLGYTLREFLQLLQHITVGTVLQIKVYRDFINIPEEWLEIYDLIPEAKFPVTSTPKKMELAKDESFTSSDDNENVDLDRRLQYYRYPWSTAHHPARRPISISRDWHGYKKKNHTISVGKDIDCDVMIHRDDKKEVKAPSPYWIMVKQDNETSSSSTSSTSDAFWLEDCAQVEEGKAQPVSKFG.

The PDZ domain occupies 22–109; that stretch reads VHNLSKTQQT…GTVLQIKVYR (88 aa).

In Macaca fascicularis (Crab-eating macaque), this protein is PDZ domain-containing protein 9 (PDZD9).